The sequence spans 405 residues: DNA primase DnaG (405 aa).

A Toprim domain is found at 172-248 (DAIIIVEGRA…HVDYIARAPP (77 aa)). Positions 178, 222, and 224 each coordinate Mg(2+). The interval 279-303 (ASGERAEAPPQPAQQPQQEQPAPQR) is disordered. The span at 292 to 303 (QQPQQEQPAPQR) shows a compositional bias: low complexity.

This sequence belongs to the archaeal DnaG primase family. In terms of assembly, forms a ternary complex with MCM helicase and DNA. Component of the archaeal exosome complex. Mg(2+) serves as cofactor.

It carries out the reaction ssDNA + n NTP = ssDNA/pppN(pN)n-1 hybrid + (n-1) diphosphate.. In terms of biological role, RNA polymerase that catalyzes the synthesis of short RNA molecules used as primers for DNA polymerase during DNA replication. Also part of the exosome, which is a complex involved in RNA degradation. Acts as a poly(A)-binding protein that enhances the interaction between heteromeric, adenine-rich transcripts and the exosome. This Pyrobaculum arsenaticum (strain DSM 13514 / JCM 11321 / PZ6) protein is DNA primase DnaG.